Consider the following 281-residue polypeptide: NADPH-dependent 7-cyano-7-deazaguanine reductase (281 aa).

Substrate is bound at residue 87 to 89; that stretch reads IES. NADPH is bound at residue 89–90; it reads SK. The active-site Thioimide intermediate is cysteine 188. Catalysis depends on aspartate 195, which acts as the Proton donor. 227-228 contributes to the substrate binding site; it reads HE. 256 to 257 contacts NADPH; it reads RG.

Belongs to the GTP cyclohydrolase I family. QueF type 2 subfamily. Homodimer.

It is found in the cytoplasm. The enzyme catalyses 7-aminomethyl-7-carbaguanine + 2 NADP(+) = 7-cyano-7-deazaguanine + 2 NADPH + 3 H(+). The protein operates within tRNA modification; tRNA-queuosine biosynthesis. In terms of biological role, catalyzes the NADPH-dependent reduction of 7-cyano-7-deazaguanine (preQ0) to 7-aminomethyl-7-deazaguanine (preQ1). This chain is NADPH-dependent 7-cyano-7-deazaguanine reductase, found in Photobacterium profundum (strain SS9).